The chain runs to 776 residues: Venom dipeptidyl peptidase 4 (776 aa).

The N-terminal stretch at 1–19 (MVPLRSFVLLNGLFFVLLA) is a signal peptide. Asn44, Asn66, and Asn329 each carry an N-linked (GlcNAc...) asparagine glycan. Disulfide bonds link Cys449–Cys452 and Cys462–Cys480. N-linked (GlcNAc...) asparagine glycans are attached at residues Asn504 and Asn577. Residue Ser638 is the Charge relay system of the active site. The cysteines at positions 658 and 769 are disulfide-linked. N-linked (GlcNAc...) asparagine glycosylation occurs at Asn693. Active-site charge relay system residues include Asp717 and His749.

This sequence belongs to the peptidase S9B family. DPPIV subfamily. As to expression, expressed by the venom gland.

Its subcellular location is the secreted. It carries out the reaction Release of an N-terminal dipeptide, Xaa-Yaa-|-Zaa-, from a polypeptide, preferentially when Yaa is Pro, provided Zaa is neither Pro nor hydroxyproline.. Its function is as follows. Venom dipeptidyl-peptidase which removes N-terminal dipeptides sequentially from polypeptides having unsubstituted N-termini provided that the penultimate residue is proline. May process venom proteins into their active forms and/or modulate the chemotactic activity of immune cells after the insect sting. The sequence is that of Venom dipeptidyl peptidase 4 from Vespa velutina (Asian yellow-legged hornet).